The primary structure comprises 426 residues: MVVDKIQAIRGMNDVLPDSTSIWRFIEQTFINCLVRYGYKEIRFPIVENTQLFKRTIGEITDIVEKEMYTFNDLNGDSITLRPEGTAGCVRACIEHGLLHNQQQKLWYLGPMFRHERPQKGRYRQFNQFGVEALGITGTGIELELISICRRLWIDLGFSQSVQLQVNSLGEINERQKYRSILVEYLRDHFQILDEDSKRRLDKNPLRVLDSKNPDLQQLIQNAPKLIDVLGDDSREHFQSFCNGLETLGIPYSINPVLVRGLDYYGQTVFEWVTDQLGSQATICAGGRYDMLVEFLGGAPTPAVGFALGLERIFLLMETLNLLNESNNKQSIFIIATNEEAILKALVMAESIRNAHPSLDVITNTAGGGFKSQFKKADKSGARLALILGEDEIAKEYVSIKDLRTEIEQISIPMTKINEFLQDYLA.

Belongs to the class-II aminoacyl-tRNA synthetase family. In terms of assembly, homodimer.

The protein resides in the cytoplasm. The enzyme catalyses tRNA(His) + L-histidine + ATP = L-histidyl-tRNA(His) + AMP + diphosphate + H(+). This Legionella pneumophila subsp. pneumophila (strain Philadelphia 1 / ATCC 33152 / DSM 7513) protein is Histidine--tRNA ligase.